The primary structure comprises 359 residues: Lipopolysaccharide 1,6-galactosyltransferase (359 aa).

2 residues coordinate UDP: Gln244 and Glu276.

This sequence belongs to the glycosyltransferase group 1 family. Glycosyltransferase 4 subfamily.

It catalyses the reaction alpha-D-Glc-(1-&gt;3)-[L-alpha-D-Hep-(1-&gt;7)]-4-O-PO3(2-)-L-alpha-D-Hep-(1-&gt;3)-4-O-PO3(2-)-L-alpha-D-Hep-(1-&gt;5)-[alpha-Kdo-(2-&gt;4)]-alpha-Kdo-(2-&gt;6)-lipid A + UDP-alpha-D-galactose = alpha-D-Gal-(1-&gt;6)-alpha-D-Glc-(1-&gt;3)-[L-alpha-D-Hep-(1-&gt;7)]-4-O-PO3(2-)-L-alpha-D-Hep-(1-&gt;3)-4-O-PO3(2-)-L-alpha-D-Hep-(1-&gt;5)-[alpha-Kdo-(2-&gt;4)]-alpha-Kdo-(2-&gt;6)-lipid A + UDP + H(+). The protein operates within bacterial outer membrane biogenesis; LPS core biosynthesis. Its function is as follows. Galactosyltransferase involved in the biosynthesis of the core oligosaccharide region of lipopolysaccharide (LPS). Catalyzes the addition of galactose from UDP-galactose to the first glucose residue of the LPS outer core. The sequence is that of Lipopolysaccharide 1,6-galactosyltransferase from Salmonella typhimurium (strain LT2 / SGSC1412 / ATCC 700720).